Reading from the N-terminus, the 205-residue chain is Mediator of RNA polymerase II transcription subunit 29 (205 aa).

A compositionally biased stretch (low complexity) spans 1 to 27 (MNPNMNMMQMSGPPMMQVSPMMQSSPQ). The disordered stretch occupies residues 1-65 (MNPNMNMMQM…QQQQQQAEKL (65 aa)). The segment covering 28–38 (PMMPTGPPGPV) has biased composition (pro residues). Low complexity predominate over residues 39-61 (PMQQQHQQQQQQQQQQQQQQQQQ).

This sequence belongs to the Mediator complex subunit 29 family. In terms of assembly, component of the Mediator complex.

It localises to the nucleus. Its function is as follows. Component of the Mediator complex, a coactivator involved in the regulated transcription of nearly all RNA polymerase II-dependent genes. Mediator functions as a bridge to convey information from gene-specific regulatory proteins to the basal RNA polymerase II transcription machinery. Mediator is recruited to promoters by direct interactions with regulatory proteins and serves as a scaffold for the assembly of a functional preinitiation complex with RNA polymerase II and the general transcription factors. This is Mediator of RNA polymerase II transcription subunit 29 (ix) from Drosophila virilis (Fruit fly).